The primary structure comprises 224 residues: Attacin-A (224 aa).

The N-terminal stretch at 1–20 (MQKTSILIVALVALFAITEA) is a signal peptide. Positions 21–34 (LPSLPTTGPIRVRR) are excised as a propeptide.

The protein belongs to the attacin/sarcotoxin-2 family. In terms of tissue distribution, hemolymph (at protein level).

Its subcellular location is the secreted. In terms of biological role, hemolymph antibacterial protein. This is Attacin-A (AttA) from Drosophila melanogaster (Fruit fly).